The chain runs to 841 residues: DNA ligase (841 aa).

NAD(+)-binding positions include 54–58 (DAEYD), 103–104 (SL), and E143. K145 serves as the catalytic N6-AMP-lysine intermediate. Residues R166, E203, K321, and K345 each contribute to the NAD(+) site. Zn(2+) contacts are provided by C471, C474, C489, and C495. The tract at residues 554–575 (KTVAESDQMPSEGSSVGASGKH) is disordered. Polar residues predominate over residues 561-570 (QMPSEGSSVG). The region spanning 764-841 (GINKAVAGKT…SEAELLTLLG (78 aa)) is the BRCT domain.

The protein belongs to the NAD-dependent DNA ligase family. LigA subfamily. The cofactor is Mg(2+). Mn(2+) serves as cofactor.

It carries out the reaction NAD(+) + (deoxyribonucleotide)n-3'-hydroxyl + 5'-phospho-(deoxyribonucleotide)m = (deoxyribonucleotide)n+m + AMP + beta-nicotinamide D-nucleotide.. Functionally, DNA ligase that catalyzes the formation of phosphodiester linkages between 5'-phosphoryl and 3'-hydroxyl groups in double-stranded DNA using NAD as a coenzyme and as the energy source for the reaction. It is essential for DNA replication and repair of damaged DNA. In Neisseria meningitidis serogroup C (strain 053442), this protein is DNA ligase.